The following is a 93-amino-acid chain: Envelope small membrane protein (93 aa).

Over 1 to 11 (MMNLLNKSLEE) the chain is Virion surface. A helical transmembrane segment spans residues 12–32 (NGSVLTAFYIFVAFVALYLLG). The Intravirion segment spans residues 33–93 (RALQAFVQAA…NEFPKNGWKQ (61 aa)).

It belongs to the gammacoronaviruses E protein family. In terms of assembly, homooligomer. Interacts with the M membrane protein in the budding compartment of the host cell, which is located between endoplasmic reticulum and the Golgi complex. The cytoplasmic tails of both proteins are important for this function. Interacts with Nucleoprotein.

The protein localises to the host Golgi apparatus membrane. Its function is as follows. Plays a central role in virus morphogenesis and assembly. Acts as a viroporin and self-assembles in host membranes forming pentameric protein-lipid pores that allow ion transport. Also plays a role in the induction of apoptosis. In Avian infectious bronchitis virus (strain Portugal/322/82) (IBV), this protein is Envelope small membrane protein.